Reading from the N-terminus, the 284-residue chain is uncharacterized protein (284 aa).

Residues Ile-9–Thr-28 traverse the membrane as a helical segment.

The protein localises to the membrane. This is an uncharacterized protein from Aquifex aeolicus (strain VF5).